The following is a 171-amino-acid chain: Disulfide bond formation protein B (171 aa).

The Cytoplasmic portion of the chain corresponds to 1–13 (MSALTRFAQSRLA). The helical transmembrane segment at 14–30 (WTLLLLTAVGLEACALF) threads the bilayer. The Periplasmic segment spans residues 31–48 (FQHVMKLDPCVMCIYQRL). An intrachain disulfide couples Cys40 to Cys43. Residues 49–64 (AVLGVLTAGLIGVVGH) traverse the membrane as a helical segment. Over 65 to 71 (QFRLLRF) the chain is Cytoplasmic. Residues 72–89 (LGVLLWGVSAAWGLKLAL) traverse the membrane as a helical segment. The Periplasmic portion of the chain corresponds to 90–144 (ELVEMQTNPSPFSTCSFLPEFPEWMPLHEWFPSVFLPTGMCTDIPWEMFGITMSQ). Cys104 and Cys130 are disulfide-bonded. A helical transmembrane segment spans residues 145 to 163 (WMVVAFSTYLIALVVFIVP). Topologically, residues 164 to 171 (ALMPTKKA) are cytoplasmic.

It belongs to the DsbB family.

It localises to the cell inner membrane. Required for disulfide bond formation in some periplasmic proteins. Acts by oxidizing the DsbA protein. In Shewanella loihica (strain ATCC BAA-1088 / PV-4), this protein is Disulfide bond formation protein B.